Here is a 536-residue protein sequence, read N- to C-terminus: MTSGQSKHEIRDMKFDVLVVGEGLAALTLLLHLPPSLKIGVISRNKYDEPSSYWAQGGISAVFSTDDDHDKHIRDTLLAGDGLCDEAAVRQIVCEGGDVLRWLIDQGVPFTREDGEIHLTREGGHSERRVAHVDDMTGRGIMRALQAKVAQLPNVIWIRQYEAVELLSDGQAVSGVIAESLADGEVTVFSAPTVVLAAGGLTGLYQYATNPHASKGEAIAMAWRAGATIENLEFVQFHPTAFQIEGRVISLITEAVRGEGGLLYNVANERFMPGYSSQQELAPRDVVARAIYSEMQAHGTSHVWLDITHQGTAFVEQHFPNLVEITRAHGCDLSQHRVPVSPAAHYTCGGIGADVAGRTNIEGLYAIGEVANCGLHGANRLASNSLLECVVMGKACAQSVTDTAGSASRLRLTLPERIETPFHPNLLADLRAILWNHAGIVRSNTGLEIGLQNMAQLQERHASVLPYGQALRAQNIFDAAHLVLLSAAARKESRGGHFNKDHADKAEAQTTQIPGVPVNFWAAGENASHAAQLAAA.

Residues 22–25 (EGLA) and 51–58 (SSYWAQGG) each bind FAD. The Proton donor/acceptor role is filled by arginine 284. FAD is bound by residues glutamate 369 and 385 to 386 (SL).

Belongs to the FAD-dependent oxidoreductase 2 family. NadB subfamily. Requires FAD as cofactor.

It is found in the cytoplasm. It carries out the reaction L-aspartate + O2 = iminosuccinate + H2O2. Its pathway is cofactor biosynthesis; NAD(+) biosynthesis; iminoaspartate from L-aspartate (oxidase route): step 1/1. Functionally, catalyzes the oxidation of L-aspartate to iminoaspartate, the first step in the de novo biosynthesis of NAD(+). In Ralstonia nicotianae (strain ATCC BAA-1114 / GMI1000) (Ralstonia solanacearum), this protein is L-aspartate oxidase 2 (nadB2).